The chain runs to 302 residues: Aspartate carbamoyltransferase catalytic subunit (302 aa).

Arg-53 and Thr-54 together coordinate carbamoyl phosphate. Lys-82 serves as a coordination point for L-aspartate. Positions 103, 131, and 134 each coordinate carbamoyl phosphate. Residues Arg-164 and Arg-223 each coordinate L-aspartate. 2 residues coordinate carbamoyl phosphate: Leu-260 and Pro-261.

It belongs to the aspartate/ornithine carbamoyltransferase superfamily. ATCase family. As to quaternary structure, heterooligomer of catalytic and regulatory chains.

It catalyses the reaction carbamoyl phosphate + L-aspartate = N-carbamoyl-L-aspartate + phosphate + H(+). Its pathway is pyrimidine metabolism; UMP biosynthesis via de novo pathway; (S)-dihydroorotate from bicarbonate: step 2/3. In terms of biological role, catalyzes the condensation of carbamoyl phosphate and aspartate to form carbamoyl aspartate and inorganic phosphate, the committed step in the de novo pyrimidine nucleotide biosynthesis pathway. The polypeptide is Aspartate carbamoyltransferase catalytic subunit (Methanococcus maripaludis (strain C6 / ATCC BAA-1332)).